The chain runs to 275 residues: Putative replication protein (275 aa).

One can recognise a BRCT domain in the interval 98–198 (SKAICFTPYD…RILKISEDYF (101 aa)).

In Wigglesworthia glossinidia brevipalpis, this protein is Putative replication protein.